We begin with the raw amino-acid sequence, 58 residues long: Light-harvesting protein B-875 alpha chain (58 aa).

Residues 1-15 are Cytoplasmic-facing; sequence MSKFYKIWMIFDPRR. The helical transmembrane segment at 16–36 threads the bilayer; sequence VFVAQGVFLFLLAVMIHLILL. Histidine 32 contributes to the a bacteriochlorophyll binding site. At 37–58 the chain is on the periplasmic side; sequence STPSYNWLEISAAKYNRVAVAE.

It belongs to the antenna complex alpha subunit family. As to quaternary structure, the core complex is formed by different alpha and beta chains, binding bacteriochlorophyll molecules, and arranged most probably in tetrameric structures disposed around the reaction center. The non-pigmented gamma chains may constitute additional components.

It localises to the cell inner membrane. Functionally, antenna complexes are light-harvesting systems, which transfer the excitation energy to the reaction centers. The chain is Light-harvesting protein B-875 alpha chain (pufA) from Cereibacter sphaeroides (strain ATCC 17023 / DSM 158 / JCM 6121 / CCUG 31486 / LMG 2827 / NBRC 12203 / NCIMB 8253 / ATH 2.4.1.) (Rhodobacter sphaeroides).